The primary structure comprises 158 residues: Methylated-DNA--protein-cysteine methyltransferase (158 aa).

The Nucleophile; methyl group acceptor role is filled by Cys-126.

It belongs to the MGMT family.

It localises to the cytoplasm. It carries out the reaction a 6-O-methyl-2'-deoxyguanosine in DNA + L-cysteinyl-[protein] = S-methyl-L-cysteinyl-[protein] + a 2'-deoxyguanosine in DNA. It catalyses the reaction a 4-O-methyl-thymidine in DNA + L-cysteinyl-[protein] = a thymidine in DNA + S-methyl-L-cysteinyl-[protein]. Functionally, involved in the cellular defense against the biological effects of O6-methylguanine (O6-MeG) and O4-methylthymine (O4-MeT) in DNA. Repairs the methylated nucleobase in DNA by stoichiometrically transferring the methyl group to a cysteine residue in the enzyme. This is a suicide reaction: the enzyme is irreversibly inactivated. The sequence is that of Methylated-DNA--protein-cysteine methyltransferase from Methanosarcina barkeri (strain Fusaro / DSM 804).